We begin with the raw amino-acid sequence, 115 residues long: MARVKRGNIARKRRNKILNLAKGFIGGNKNLFRTANQRVMKALCNAYRDRRRRKRDFRRLWISRINASARINGTNYSKLINGMKNAEIIINRKMLAQLALNDPKCFEKIVSSVSN.

Belongs to the bacterial ribosomal protein bL20 family.

Functionally, binds directly to 23S ribosomal RNA and is necessary for the in vitro assembly process of the 50S ribosomal subunit. It is not involved in the protein synthesizing functions of that subunit. The sequence is that of Large ribosomal subunit protein bL20 from Prochlorococcus marinus (strain MIT 9301).